The primary structure comprises 250 residues: Probable xyloglucan-specific endo-beta-1,4-glucanase A (250 aa).

Positions 1–19 (MKLSVLSLASLASAAALNA) are cleaved as a signal peptide. An N-linked (GlcNAc...) asparagine glycan is attached at Asn-72.

This sequence belongs to the glycosyl hydrolase 12 (cellulase H) family.

It is found in the secreted. The catalysed reaction is xyloglucan + H2O = xyloglucan oligosaccharides.. Functionally, catalyzes endohydrolysis of 1,4-beta-D-glucosidic linkages in xyloglucan with retention of the beta-configuration of the glycosyl residues. Specific for xyloglucan and does not hydrolyze other cell wall components. The chain is Probable xyloglucan-specific endo-beta-1,4-glucanase A (xgeA) from Aspergillus terreus (strain NIH 2624 / FGSC A1156).